The following is a 478-amino-acid chain: Cytochrome c-552 (478 aa).

Positions 1-27 are cleaved as a signal peptide; that stretch reads MKKQWTRRSAAAIAMVTTLLLSSHSFA. Position 91 (His91) interacts with heme c. 3 residues coordinate heme: Cys119, Cys122, and Lys123. Positions 157, 160, 161, 206, 209, and 210 each coordinate heme c. The Ca(2+) site is built by Glu212, Tyr213, Lys258, and Gln260. Tyr213 lines the substrate pocket. His261 provides a ligand contact to substrate. Positions 272, 279, 282, 283, 298, 311, 314, 315, and 390 each coordinate heme c.

This sequence belongs to the cytochrome c-552 family. Ca(2+) serves as cofactor. Requires heme c as cofactor.

The protein localises to the periplasm. It carries out the reaction 6 Fe(III)-[cytochrome c] + NH4(+) + 2 H2O = 6 Fe(II)-[cytochrome c] + nitrite + 8 H(+). It functions in the pathway nitrogen metabolism; nitrate reduction (assimilation). Catalyzes the reduction of nitrite to ammonia, consuming six electrons in the process. The protein is Cytochrome c-552 of Aliivibrio salmonicida (strain LFI1238) (Vibrio salmonicida (strain LFI1238)).